The primary structure comprises 366 residues: Chorismate synthase (366 aa).

Positions 47 and 53 each coordinate NADP(+). FMN-binding positions include R124 to S126, G286, K301 to T305, and R327.

Belongs to the chorismate synthase family. As to quaternary structure, homotetramer. Requires FMNH2 as cofactor.

It carries out the reaction 5-O-(1-carboxyvinyl)-3-phosphoshikimate = chorismate + phosphate. It participates in metabolic intermediate biosynthesis; chorismate biosynthesis; chorismate from D-erythrose 4-phosphate and phosphoenolpyruvate: step 7/7. In terms of biological role, catalyzes the anti-1,4-elimination of the C-3 phosphate and the C-6 proR hydrogen from 5-enolpyruvylshikimate-3-phosphate (EPSP) to yield chorismate, which is the branch point compound that serves as the starting substrate for the three terminal pathways of aromatic amino acid biosynthesis. This reaction introduces a second double bond into the aromatic ring system. This chain is Chorismate synthase, found in Microcystis aeruginosa (strain NIES-843 / IAM M-2473).